Here is a 167-residue protein sequence, read N- to C-terminus: MLTTGRSFRNERQINDAERKKIELVFHQCDVDKKGYMSREDLKIAVVMLFGYKPSKSETNILMENGTIRDCKGVPLEPFATLMRRKMSAEDPYEKARQIFSAFDVHCRGFLKLDDFKSAFKRVAPRLQERTVLEAFRHADQDSDGHISFKDFENIISYGLANTCTST.

3 consecutive EF-hand domains span residues 17–52 (AERK…LFGY), 91–126 (DPYE…VAPR), and 127–162 (LQER…GLAN). Ca(2+) contacts are provided by aspartate 140, aspartate 142, aspartate 144, histidine 146, and aspartate 151.

The sequence is that of EF-hand calcium-binding domain-containing protein 11 (efcab11) from Danio rerio (Zebrafish).